The primary structure comprises 462 residues: Jasmonoyl--L-amino acid synthetase GH3.3 (462 aa).

S103 provides a ligand contact to ATP. S106 contacts jasmonate. Residues T126, N172, and 337 to 342 (GASEGW) contribute to the ATP site. 170-174 (TTNVY) serves as a coordination point for an L-alpha-amino acid. Residues 334 to 337 (AEYG) and S339 contribute to the jasmonate site.

Belongs to the IAA-amido conjugating enzyme family. Expressed in green shoots and flowers.

The catalysed reaction is a jasmonate + an L-alpha-amino acid + ATP = a jasmonyl-L-amino acid + AMP + diphosphate + H(+). In terms of biological role, catalyzes the synthesis of jasmonate-amino acid conjugates by adenylation. Catalyzes the conjugation of jasmonate (JA) to Ile when expressed in a heterologous system (E.coli). Catalyzes in vitro the conjugation of jasmonate (JA) to Ile, Phe, Leu, Met, Val and Trp. May catalyze the synthesis of indole-3-acetic acid (IAA)-amino acid conjugates, providing a mechanism for the plant to cope with the presence of excess auxin. This chain is Jasmonoyl--L-amino acid synthetase GH3.3, found in Oryza sativa subsp. japonica (Rice).